A 202-amino-acid chain; its full sequence is Large ribosomal subunit protein bL25 (202 aa).

It belongs to the bacterial ribosomal protein bL25 family. CTC subfamily. In terms of assembly, part of the 50S ribosomal subunit; part of the 5S rRNA/L5/L18/L25 subcomplex. Contacts the 5S rRNA. Binds to the 5S rRNA independently of L5 and L18.

In terms of biological role, this is one of the proteins that binds to the 5S RNA in the ribosome where it forms part of the central protuberance. This Nitrosomonas eutropha (strain DSM 101675 / C91 / Nm57) protein is Large ribosomal subunit protein bL25.